We begin with the raw amino-acid sequence, 541 residues long: Major facilitator-type transporter ecdD (541 aa).

The helical transmembrane segment at 15–35 (AWPAILISGFVAFGGILFGYD) threads the bilayer. Asn64 is a glycosylation site (N-linked (GlcNAc...) asparagine). 4 helical membrane passes run 72 to 92 (AIVSILSAGTFFGALGASPMG), 106 to 126 (GIFVLGVVLQTIATSIPPFLA), 129 to 149 (FFAGLGVGLISALVPLYQSET), and 156 to 176 (GFIVGAYQFAITVGLLLASVL). Asn178 and Asn184 each carry an N-linked (GlcNAc...) asparagine glycan. A helical transmembrane segment spans residues 191–211 (IPIAVQFAWSIILVGGMLILP). N-linked (GlcNAc...) asparagine glycosylation is present at Asn253. A run of 6 helical transmembrane segments spans residues 277–297 (LVTGCLLQALQQLSGINFIMY), 313–333 (VITLITNCVNVGSTLPGLYAI), 340–360 (PVLLTGAIGMAVSQLLVAVLG), 384–404 (IAFICLYIFFFAASWGPSAWV), 418–440 (SLSMTTATNWLLNWALSFSTPYL), and 454–474 (IFFIWFGCCFLCIGFVHFMIY).

It belongs to the major facilitator superfamily. Sugar transporter (TC 2.A.1.1) family.

The protein localises to the membrane. This chain is Major facilitator-type transporter ecdD, found in Aspergillus rugulosus (Emericella rugulosa).